Reading from the N-terminus, the 129-residue chain is Small ribosomal subunit protein uS11 (129 aa).

Belongs to the universal ribosomal protein uS11 family. Part of the 30S ribosomal subunit. Interacts with proteins S7 and S18. Binds to IF-3.

Its function is as follows. Located on the platform of the 30S subunit, it bridges several disparate RNA helices of the 16S rRNA. Forms part of the Shine-Dalgarno cleft in the 70S ribosome. In Dechloromonas aromatica (strain RCB), this protein is Small ribosomal subunit protein uS11.